The following is a 157-amino-acid chain: Putative pre-16S rRNA nuclease (157 aa).

It belongs to the YqgF nuclease family.

It localises to the cytoplasm. Functionally, could be a nuclease involved in processing of the 5'-end of pre-16S rRNA. This is Putative pre-16S rRNA nuclease from Anaplasma marginale (strain St. Maries).